Reading from the N-terminus, the 192-residue chain is 7-methyl-GTP pyrophosphatase (192 aa).

Residue Asp69 is the Proton acceptor of the active site.

Belongs to the Maf family. YceF subfamily. Requires a divalent metal cation as cofactor.

The protein localises to the cytoplasm. It carries out the reaction N(7)-methyl-GTP + H2O = N(7)-methyl-GMP + diphosphate + H(+). Nucleoside triphosphate pyrophosphatase that hydrolyzes 7-methyl-GTP (m(7)GTP). May have a dual role in cell division arrest and in preventing the incorporation of modified nucleotides into cellular nucleic acids. The protein is 7-methyl-GTP pyrophosphatase of Methylobacillus flagellatus (strain ATCC 51484 / DSM 6875 / VKM B-1610 / KT).